The sequence spans 317 residues: Insulin-like growth factor-binding protein 2 (317 aa).

The first 33 residues, 1–33 (MQPRLGGPALLLLPPLLLLLLLGAGGGDCGARA), serve as a signal peptide directing secretion. Residues 35–126 (VLFRCPPCTP…VHGEGTCEKH (92 aa)) form the IGFBP N-terminal domain. 6 disulfide bridges follow: Cys39–Cys76, Cys42–Cys78, Cys50–Cys79, Cys68–Cys82, Cys90–Cys103, and Cys97–Cys123. Disordered stretches follow at residues 126 to 146 (HGDA…EEHS) and 190 to 218 (QHRQ…ARTP). The 83-residue stretch at 216–298 (RTPCQQELDQ…APTIRGDPEC (83 aa)) folds into the Thyroglobulin type-1 domain. Cystine bridges form between Cys219–Cys253, Cys264–Cys275, and Cys277–Cys298. The Cell attachment site motif lies at 293–295 (RGD).

As to quaternary structure, interacts with IGF1. Interacts with IGF2. Interacts (via RGD motif) with integrin alpha5/ITGA5; this interaction induces cell migration, adhesion or apoptosis according to the context. Interacts with PTPRB; this interaction leads to PTPRB dimerization and inactivation. Post-translationally, cleaved by MMP9 leading to release of free IGF2 from IGFBP2-IGF2 complex, which contributes to enhance the motility and the growth of astrocytes. O-glycosylated.

It localises to the secreted. Its function is as follows. Multifunctional protein that plays a critical role in regulating the availability of IGFs such as IGF1 and IGF2 to their receptors and thereby regulates IGF-mediated cellular processes including proliferation, differentiation, and apoptosis in a cell-type specific manner. Functions coordinately with receptor protein tyrosine phosphatase beta/PTPRB and the IGF1 receptor to regulate IGF1-mediated signaling by stimulating the phosphorylation of PTEN leading to its inactivation and AKT1 activation. Plays a positive role in cell migration via interaction with integrin alpha5/ITGA5 through an RGD motif. Additionally, interaction with ITGA5/ITGB1 enhances the adhesion of endothelial progenitor cells to endothelial cells. Upon mitochondrial damage, facilitates apoptosis with ITGA5 of podocytes, and then activates the phosphorylation of focal adhesion kinase (FAK)-mediated mitochondrial injury. In Bos taurus (Bovine), this protein is Insulin-like growth factor-binding protein 2 (IGFBP2).